Consider the following 139-residue polypeptide: Ribulose bisphosphate carboxylase small subunit (139 aa).

The protein belongs to the RuBisCO small chain family. Heterohexadecamer of 8 large and 8 small subunits.

It is found in the plastid. The protein resides in the chloroplast. RuBisCO catalyzes two reactions: the carboxylation of D-ribulose 1,5-bisphosphate, the primary event in carbon dioxide fixation, as well as the oxidative fragmentation of the pentose substrate in the photorespiration process. Both reactions occur simultaneously and in competition at the same active site. Although the small subunit is not catalytic it is essential for maximal activity. In Chrysotila carterae (Marine alga), this protein is Ribulose bisphosphate carboxylase small subunit.